The primary structure comprises 231 residues: 5'-methylthioadenosine/S-adenosylhomocysteine nucleosidase (231 aa).

The active-site Proton acceptor is the Glu-12. Residues Gly-78, Met-153, and 174 to 175 contribute to the substrate site; that span reads ME. The active-site Proton donor is the Asp-198.

Belongs to the PNP/UDP phosphorylase family. MtnN subfamily.

The enzyme catalyses S-adenosyl-L-homocysteine + H2O = S-(5-deoxy-D-ribos-5-yl)-L-homocysteine + adenine. The catalysed reaction is S-methyl-5'-thioadenosine + H2O = 5-(methylsulfanyl)-D-ribose + adenine. It catalyses the reaction 5'-deoxyadenosine + H2O = 5-deoxy-D-ribose + adenine. It functions in the pathway amino-acid biosynthesis; L-methionine biosynthesis via salvage pathway; S-methyl-5-thio-alpha-D-ribose 1-phosphate from S-methyl-5'-thioadenosine (hydrolase route): step 1/2. Its function is as follows. Catalyzes the irreversible cleavage of the glycosidic bond in both 5'-methylthioadenosine (MTA) and S-adenosylhomocysteine (SAH/AdoHcy) to adenine and the corresponding thioribose, 5'-methylthioribose and S-ribosylhomocysteine, respectively. Also cleaves 5'-deoxyadenosine, a toxic by-product of radical S-adenosylmethionine (SAM) enzymes, into 5-deoxyribose and adenine. In Bacillus cereus (strain G9842), this protein is 5'-methylthioadenosine/S-adenosylhomocysteine nucleosidase.